We begin with the raw amino-acid sequence, 407 residues long: Peptidase T (407 aa).

Residue His81 participates in Zn(2+) binding. Residue Asp83 is part of the active site. Asp142 provides a ligand contact to Zn(2+). Glu176 (proton acceptor) is an active-site residue. Zn(2+) contacts are provided by Glu177, Asp199, and His381.

Belongs to the peptidase M20B family. The cofactor is Zn(2+).

The protein localises to the cytoplasm. The enzyme catalyses Release of the N-terminal residue from a tripeptide.. Its function is as follows. Cleaves the N-terminal amino acid of tripeptides. This Streptococcus pneumoniae (strain ATCC 700669 / Spain 23F-1) protein is Peptidase T.